Here is a 127-residue protein sequence, read N- to C-terminus: Large ribosomal subunit protein eL22x (127 aa).

Belongs to the eukaryotic ribosomal protein eL22 family.

This chain is Large ribosomal subunit protein eL22x (RPL22A), found in Arabidopsis thaliana (Mouse-ear cress).